Here is a 30-residue protein sequence, read N- to C-terminus: Cyclotide cycloviolacin O17 (30 aa).

A cross-link (cyclopeptide (Gly-Asn)) is located at residues 1–30; the sequence is GIPCGESCVWIPCISAAIGCSCKNKVCYRN. Intrachain disulfides connect Cys-4-Cys-20, Cys-8-Cys-22, and Cys-13-Cys-27.

This is a cyclic peptide.

Probably participates in a plant defense mechanism. In Psychotria brachyceras, this protein is Cyclotide cycloviolacin O17.